A 493-amino-acid polypeptide reads, in one-letter code: Cytochrome P450 2E1 (493 aa).

298-303 (FAGTET) lines the substrate pocket. A heme-binding site is contributed by cysteine 437.

Belongs to the cytochrome P450 family. In terms of assembly, interacts with chaperones HSP70 and HSP90; this interaction is required for initial targeting to mitochondria. Requires heme as cofactor.

The protein resides in the endoplasmic reticulum membrane. The protein localises to the microsome membrane. Its subcellular location is the mitochondrion inner membrane. It catalyses the reaction an organic molecule + reduced [NADPH--hemoprotein reductase] + O2 = an alcohol + oxidized [NADPH--hemoprotein reductase] + H2O + H(+). The enzyme catalyses (5Z,8Z,11Z)-eicosatrienoate + reduced [NADPH--hemoprotein reductase] + O2 = 19-hydroxy-(5Z,8Z,11Z)-eicosatrienoate + oxidized [NADPH--hemoprotein reductase] + H2O + H(+). It carries out the reaction (5Z,8Z,11Z,14Z,17Z)-eicosapentaenoate + reduced [NADPH--hemoprotein reductase] + O2 = 19-hydroxy-(5Z,8Z,11Z,14Z,17Z)-eicosapentaenoate + oxidized [NADPH--hemoprotein reductase] + H2O + H(+). The catalysed reaction is (4Z,7Z,10Z,13Z,16Z,19Z)-docosahexaenoate + reduced [NADPH--hemoprotein reductase] + O2 = 21-hydroxy-(4Z,7Z,10Z,13Z,16Z,19Z)-docosahexaenoate + oxidized [NADPH--hemoprotein reductase] + H2O + H(+). It catalyses the reaction dodecanoate + reduced [NADPH--hemoprotein reductase] + O2 = 11-hydroxydodecanoate + oxidized [NADPH--hemoprotein reductase] + H2O + H(+). The enzyme catalyses tetradecanoate + reduced [NADPH--hemoprotein reductase] + O2 = 13-hydroxytetradecanoate + oxidized [NADPH--hemoprotein reductase] + H2O + H(+). It carries out the reaction 4-nitrophenol + NADPH + O2 + H(+) = 4-nitrocatechol + NADP(+) + H2O. Its pathway is lipid metabolism; fatty acid metabolism. The omega-1 hydroxylase activity is stimulated by cytochrome b5. Functionally, a cytochrome P450 monooxygenase involved in the metabolism of fatty acids. Mechanistically, uses molecular oxygen inserting one oxygen atom into a substrate, and reducing the second into a water molecule, with two electrons provided by NADPH via cytochrome P450 reductase (NADPH--hemoprotein reductase). Catalyzes the hydroxylation of carbon-hydrogen bonds. Hydroxylates fatty acids specifically at the omega-1 position displaying the highest catalytic activity for saturated fatty acids. May be involved in the oxidative metabolism of xenobiotics. The protein is Cytochrome P450 2E1 (CYP2E1) of Macaca mulatta (Rhesus macaque).